The sequence spans 198 residues: MSFAEKITGLLARPNQQDPVGGPEQPWYLKYGSRLLGIVAAFFAILFGLWNVLSIITLSVSCLVAGIIQMIAGFIVMVLEAPCCFVCIEQVNGIADKVDAKPMYFRAGLYCALAVPPIFMCFGLASLFGSGLIFATGAVYAMMALGKKASAEDMRAAAQQTGYGGNGTAASTTNDRAGIVNNAQPFSFTGAVGTDSNV.

3 helical membrane passes run 36-56, 67-89, and 114-134; these read LGIVAAFFAILFGLWNVLSII, IIQMIAGFIVMVLEAPCCFVCIE, and AVPPIFMCFGLASLFGSGLIF.

The protein belongs to the calcium channel flower family. Homomultimer. Associates with the dally/ magu complex.

It is found in the cell membrane. It localises to the cytoplasmic vesicle. The protein resides in the secretory vesicle. Its subcellular location is the synaptic vesicle membrane. The protein localises to the presynaptic cell membrane. It is found in the endosome. With respect to regulation, channel activity is inhibited by La(3+), which reduces Ca(2+) influx and thus inhibits it's function in promoting activity-dependent bulk endocytosis (ADBE) in response to high stimuli. In terms of biological role, transmembrane protein which mediates synaptic endocytosis, fitness-based cell culling, neuronal culling, morphogen gradient scaling, and calcium transport. Regulates synaptic endocytosis and hence couples exo- with endocytosis. Controls two major modes of synaptic vesicle (SV) endocytosis in the synaptic boutons of neuromuscular junctions (NMJs); Ca(2+) channel-independent Clathrin-mediated endocytosis (CME) in response to mild stimulation, and Ca(2+) channel-dependent activity-dependent bulk endocytosis (ADBE) in response to strong stimulation. Functions in ADBE and subsequent SV reformation from bulk endosomes by initiating Ca(2+) channel-dependent phosphatidylinositol 4,5-bisphosphate (PtdIns(4,5)P2) compartmentalization in synaptic boutons. There it acts at the periactive zone to provide the low Ca(2+) levels required to initiate Calcineurin activation and upregulate PtdIns(4,5)P2. Conversely PtdIns(4,5)P2 enhances fwe Ca(2+) channel-activity, establishing a positive feedback loop that induces PtdIns(4,5)P2 microdomain at the periactive zone. These microdomains trigger bulk membrane invagination (i.e. ADBE) by triggering actin polymerization while also promoting localization of fwe to bulk endosomes, thereby removing the ADBE trigger to reduce endocytosis and prevent excess membrane uptake. PtdIns(4,5)P2 then promotes SV reformation from the bulk endosomes, to coordinate ADBE and subsequent SV reformation. Different combinations of the flower isoforms at the cell membrane are also required for the identification and elimination of suboptimal or supernumerary cells during development, regeneration, and adulthood. Required for the recognition and elimination of unfit cells in the developing wing during cell competition. In the developing pupal retina, mediates the elimination of unwanted postmitotic neurons, including supernumerary photoreceptor neurons that form at the periphery of the retina and are contained within incomplete ommatidia units. Also required for efficient elimination and replacement of old neurons by newly generated neurons during regeneration in the adult brain following mechanical injury. Downstream of the flower fitness fingerprints, cells identified as unwanted or unfit are eliminated via apoptosis through the expression of ahuizotl (azot). However, the cells marked for elimination by the flower isoforms only undergo apoptosis if additional thresholds are met; (1) their neighboring fit/healthy cells express different levels of the fwe isoforms, and (2) the levels of the protective signal SPARC expressed by the loser or unwanted cells are unable to inhibit caspase activation. These additional thresholds for flower-mediated apoptosis, allows useful cells to recover from transient and limited stress before they are unnecessarily eliminated. Functions with dally and magu in a mechanism of scaling, which utilises apoptosis to ensure that the dpp morphogen gradient, which mediates organ growth, remains proportional to the size of the growing wing. In this mechanism, fwe represses dally- and Magu-dependent activity in expanding the gradient, and dally/Magu inhibits fwe-dependent apoptosis to keep cell death rate low. When the levels of these different proteins are optimally regulated the gradient correctly scales with organ growth but when this fails, fwe-mediated apoptosis is activated to trim the developing tissue to match the correct size of the gradient. This chain is Calcium channel flower, found in Drosophila persimilis (Fruit fly).